The chain runs to 445 residues: rRNA methyltransferase 3B, mitochondrial (445 aa).

The N-terminal 37 residues, 1-37 (MATRIASMRFRCALFQSALTLGRNEVNIKRYVRRRRA), are a transit peptide targeting the mitochondrion. Disordered regions lie at residues 52 to 90 (EGVI…SQPV) and 311 to 334 (HSTT…SDYG). Polar residues-rich tracts occupy residues 54–70 (VISQ…NDIT), 78–90 (IENP…SQPV), and 311–324 (HSTT…NTTP). Residues G387, I411, and L420 each contribute to the S-adenosyl-L-methionine site.

The protein belongs to the class IV-like SAM-binding methyltransferase superfamily. RNA methyltransferase TrmH family.

It is found in the mitochondrion. It carries out the reaction a uridine in rRNA + S-adenosyl-L-methionine = a 2'-O-methyluridine in rRNA + S-adenosyl-L-homocysteine + H(+). Functionally, S-adenosyl-L-methionine-dependent 2'-O-ribose methyltransferase that catalyzes the formation of 2'-O-methylguanosine at position 1485 (Gm1485) in the mitochondrial large subunit ribosomal RNA (mtLSU rRNA), a conserved modification in the peptidyl transferase domain of the mtLSU rRNA. Also required for formation of 2'-O-methyluridine at position 1484 (Um1484) mediated by MRM2. This is rRNA methyltransferase 3B, mitochondrial from Danio rerio (Zebrafish).